The primary structure comprises 1338 residues: Thioester-containing protein 1 allele S3 (1338 aa).

A signal peptide spans 1–21; it reads MWQFIRSRILTVIIFIGAAHG. N-linked (GlcNAc...) asparagine glycans are attached at residues N68, N199, N242, N312, and N481. The may contain the cleavage site stretch occupies residues 580-609; the sequence is ENEFDIFHSLGLFARTLDDILFDSANEKTG. N-linked (GlcNAc...) asparagine glycosylation is found at N637, N728, N813, and N828. Positions 859 to 862 form a cross-link, isoglutamyl cysteine thioester (Cys-Gln); the sequence is CGEQ. Disulfide bonds link C1217–C1283, C1326–C1338, and C1329–C1334.

In terms of assembly, heterodimer of a TEP1-N chain and an TEP1-C chain non-covalently linked. Forms a complex composed of TEP1-N and TEP1-C heterodimer, LRIM1 and APL1C; the interaction stabilizes TEP1-N and TEP1-C heterodimer, prevents its binding to tissues while circulating in the hemolymph and protects the thioester bond from hydrolysis. Mature TEP1 and to a lesser extent full-length TEP1 interact with SPCLIP1; the interaction is induced by microbial infection. In the hemolymph, the full-length protein is cleaved by an unknow protease into a 75kDa N-terminal (TEP1-N) chain and an 80kDa C-terminal (TEP1-C) chain which remain non-covalently linked. The TEP1-C chain contains the thioester bond which covalently binds to the pathogen surface. Cleavage is induced by bacterial infection or aseptic wound injury. During embryonic and pupal development, the cleaved form is the predominant form. In terms of processing, N-glycosylated.

Its subcellular location is the secreted. Plays an essential role in the innate immune response against bacteria, fungi and protozoa infection. After proteolytic cleavage, the protein C-terminus binds covalently through a thioester bond to the pathogen surface resulting in pathogen clearance either by melanization or lysis. Initiate the recruitment and activation of a cascade of proteases, mostly of CLIP-domain serine proteases, which leads to the proteolytic cleavage of the prophenoloxidase (PPO) into active phenoloxidase (PO), the rate-limiting enzyme in melanin biosynthesis. In response to parasite P.berghei-mediated infection, binds to and mediates killing of ookinetes, as they egress from midgut epithelial cells into the basal labyrinth, by both lysis and melanization. During bacterial infection, binds to both Gram-positive and Gram-negative bacteria but only promotes phagocytosis of Gram-negative bacteria. Promotes the accumulation of SPCLIP1 onto the surface of P.berghei ookinetes and bacterium E.coli which leads to the melanization of the pathogen. Recruits CLIPA2 to bacteria surface. In response to bacterial infection, required for periostial hemocyte aggregation, but not for the aggregation of sessile hemocytes in non-periostial regions. During the late stage of fungus B.bassiana-mediated infection, required for the initiation of hyphae melanization by binding to the surface of hyphae and recruiting prophenoloxidase PPO to them. Plays a role in male fertility by binding to defective sperm cells and promoting their removal during spermatogenesis. Its function is as follows. Binds to and mediates killing of parasite P.bergei ookinetes by lysis. Functionally, binds covalently through a thioester bond to the pathogen surface resulting in pathogen clearance. This Anopheles gambiae (African malaria mosquito) protein is Thioester-containing protein 1 allele S3.